The sequence spans 187 residues: Large ribosomal subunit protein mL49 (187 aa).

Belongs to the mitochondrion-specific ribosomal protein mL49 family.

It localises to the mitochondrion. This chain is Large ribosomal subunit protein mL49 (mrpl-49), found in Caenorhabditis elegans.